Here is a 295-residue protein sequence, read N- to C-terminus: MKPTYCGYAAIIGRPNVGKSTLLNQLLGQKISITSRKPQTTRYQILGVKTFKDIQVIYVDTPGLHASTERTINRYMNRTARGALRDVDAIVFVIEPHWESQDAWVLDNLKEIETPVFLVINKVDKIKNRAELLPLIEKVSSLYAFQKITPLSAKTGDQVGTLEQAVHQLMPESPFYFPPEQVTDRSDQFMASEIIREKLMRLLGQEIPYSLAVTLIEFRKEEKIIRISAVIWVEKKSQKGIVIGKGGERLKRVGTNARLDMEKWFGKRVFLQLWVKVKSGWADNERLLRELGFEE.

Residues 5 to 172 form the Era-type G domain; it reads YCGYAAIIGR…EQAVHQLMPE (168 aa). A G1 region spans residues 13-20; sequence GRPNVGKS. Residue 13–20 coordinates GTP; sequence GRPNVGKS. The G2 stretch occupies residues 39 to 43; that stretch reads QTTRY. Residues 60-63 form a G3 region; the sequence is DTPG. GTP contacts are provided by residues 60-64 and 121-124; these read DTPGL and NKVD. The G4 stretch occupies residues 121 to 124; that stretch reads NKVD. The G5 stretch occupies residues 151–153; that stretch reads LSA. Residues 203–279 form the KH type-2 domain; that stretch reads LGQEIPYSLA…FLQLWVKVKS (77 aa).

This sequence belongs to the TRAFAC class TrmE-Era-EngA-EngB-Septin-like GTPase superfamily. Era GTPase family. Monomer.

Its subcellular location is the cytoplasm. It is found in the cell inner membrane. An essential GTPase that binds both GDP and GTP, with rapid nucleotide exchange. Plays a role in 16S rRNA processing and 30S ribosomal subunit biogenesis and possibly also in cell cycle regulation and energy metabolism. This chain is GTPase Era, found in Coxiella burnetii (strain CbuG_Q212) (Coxiella burnetii (strain Q212)).